The chain runs to 157 residues: 6,7-dimethyl-8-ribityllumazine synthase (157 aa).

5-amino-6-(D-ribitylamino)uracil is bound by residues phenylalanine 22, 57 to 59, and 81 to 83; these read AYE and TVI. Residue 86-87 participates in (2S)-2-hydroxy-3-oxobutyl phosphate binding; that stretch reads GT. Histidine 89 serves as the catalytic Proton donor. Phenylalanine 114 is a 5-amino-6-(D-ribitylamino)uracil binding site. Residue arginine 128 coordinates (2S)-2-hydroxy-3-oxobutyl phosphate.

It belongs to the DMRL synthase family. In terms of assembly, forms an icosahedral capsid composed of 60 subunits, arranged as a dodecamer of pentamers.

It catalyses the reaction (2S)-2-hydroxy-3-oxobutyl phosphate + 5-amino-6-(D-ribitylamino)uracil = 6,7-dimethyl-8-(1-D-ribityl)lumazine + phosphate + 2 H2O + H(+). It functions in the pathway cofactor biosynthesis; riboflavin biosynthesis; riboflavin from 2-hydroxy-3-oxobutyl phosphate and 5-amino-6-(D-ribitylamino)uracil: step 1/2. Its function is as follows. Catalyzes the formation of 6,7-dimethyl-8-ribityllumazine by condensation of 5-amino-6-(D-ribitylamino)uracil with 3,4-dihydroxy-2-butanone 4-phosphate. This is the penultimate step in the biosynthesis of riboflavin. This chain is 6,7-dimethyl-8-ribityllumazine synthase, found in Haemophilus influenzae (strain 86-028NP).